We begin with the raw amino-acid sequence, 387 residues long: Ferrochelatase (387 aa).

Residues His196 and Glu277 each coordinate Fe cation.

Belongs to the ferrochelatase family.

The protein localises to the cytoplasm. The enzyme catalyses heme b + 2 H(+) = protoporphyrin IX + Fe(2+). It functions in the pathway porphyrin-containing compound metabolism; protoheme biosynthesis; protoheme from protoporphyrin-IX: step 1/1. Functionally, catalyzes the ferrous insertion into protoporphyrin IX. This is Ferrochelatase from Trichodesmium erythraeum (strain IMS101).